Consider the following 1265-residue polypeptide: Dynactin subunit 1 (1265 aa).

One can recognise a CAP-Gly domain in the interval 27–69; it reads GMTSFAVGKWVGVVLDEPKGKNSGSIKGQQYFQCDENCGMFVR. The disordered stretch occupies residues 81-179; sequence GSRRSIEDVS…GNGAASHASS (99 aa). S85, S110, S114, S117, and S121 each carry phosphoserine. Composition is skewed to low complexity over residues 103–138 and 161–177; these read RLSS…SSSS and AEGA…ASHA. Position 183 is a phosphoserine (S183). 3 coiled-coil regions span residues 213–570, 812–836, and 967–1084; these read NSGA…ESLQ, LIQF…RLPS, and QRAQ…NSTT. Residues 1082-1106 are disordered; it reads STTGKVQPGSESHSPHNISLSGNTS. At S1117 the chain carries Phosphoserine. Residues 1128–1160 adopt a coiled-coil conformation; it reads EEVELLKNAFNQERNQRLRLQAQDMRAKLSQFE.

The protein belongs to the dynactin 150 kDa subunit family. In terms of assembly, monomer and homodimer. Subunit of dynactin, a multiprotein complex part of a tripartite complex with dynein and a adapter, such as BICDL1, BICD2 or HOOK3. The dynactin complex is built around ACTR1A/ACTB filament and consists of an actin-related filament composed of a shoulder domain, a pointed end and a barbed end. Its length is defined by its flexible shoulder domain. The soulder is composed of 2 DCTN1 subunits, 4 DCTN2 and 2 DCTN3. DCTN1/p150(glued) binds directly to microtubules and to cytoplasmic dynein.

Its subcellular location is the cytoplasm. It localises to the cytoskeleton. Part of the dynactin complex that activates the molecular motor dynein for ultra-processive transport along microtubules. Plays a key role in dynein-mediated retrograde transport of vesicles and organelles along microtubules by recruiting and tethering dynein to microtubules. Binds to both dynein and microtubules providing a link between specific cargos, microtubules and dynein. Essential for targeting dynein to microtubule plus ends, recruiting dynein to membranous cargos and enhancing dynein processivity (the ability to move along a microtubule for a long distance without falling off the track). Can also act as a brake to slow the dynein motor during motility along the microtubule. Can regulate microtubule stability by promoting microtubule formation, nucleation and polymerization and by inhibiting microtubule catastrophe in neurons. Inhibits microtubule catastrophe by binding both to microtubules and to tubulin, leading to enhanced microtubule stability along the axon. Plays a role in metaphase spindle orientation. Plays a role in centriole cohesion and subdistal appendage organization and function. Its recruitment to the centriole in a KIF3A-dependent manner is essential for the maintenance of centriole cohesion and the formation of subdistal appendage. Also required for microtubule anchoring at the mother centriole. Plays a role in primary cilia formation. This chain is Dynactin subunit 1, found in Drosophila melanogaster (Fruit fly).